Here is a 675-residue protein sequence, read N- to C-terminus: Vitamin K-dependent protein S (675 aa).

Positions 1–24 (MRVLGGRTGTLLACLALVLPVLEA) are cleaved as a signal peptide. The propeptide occupies 25 to 41 (NFLSRQHASQVLIRRRR). A Gla domain is found at 42-87 (ANTLLEETKKGNLERECIEELCNKEEAREIFENNPETEYFYPKYLG). A 4-carboxyglutamate mark is found at E47, E48, E55, E57, E60, E61, E66, E67, E70, E73, and E77. A disulfide bridge links C58 with C63. Cystine bridges form between C88–C113, C121–C134, C126–C143, C145–C154, C161–C175, C171–C184, C186–C199, C205–C217, C212–C226, C228–C241, C247–C256, C252–C265, C267–C282, C288–C567, C449–C475, and C638–C665. Residues 88–116 (CLGSFRAGLFTAARLSTNAYPDLRSCVNA) are thrombin-sensitive. Residues 117–155 (ISDQCNPLPCNEDGFMTCKDGQATFTCICKSGWQGEKCE) form the EGF-like 1 domain. D136 carries the post-translational modification (3R)-3-hydroxyaspartate. The 44-residue stretch at 157 to 200 (DINECKDPVNINGGCSQICENTPGSYHCSCKNGFVMLSNKKDCK) folds into the EGF-like 2; calcium-binding domain. N177 carries the (3R)-3-hydroxyasparagine modification. Positions 201 to 242 (DVDECVLKPSICGTAVCKNIPGDFECECAEGYKYNPVSKSCD) constitute an EGF-like 3; calcium-binding domain. The residue at position 219 (N219) is a (3R)-3-hydroxyasparagine. Residues 243–283 (DVDECAENLCAQLCVNYPGGYSCYCDGKKGFKLAQDQKSCE) enclose the EGF-like 4; calcium-binding domain. Residue N258 is modified to (3R)-3-hydroxyasparagine. 2 consecutive Laminin G-like domains span residues 299–475 (LLYL…NKHC) and 484–665 (YYPG…AHSC). N-linked (GlcNAc...) asparagine glycosylation is found at N499 and N509.

Post-translationally, the iron and 2-oxoglutarate dependent 3-hydroxylation of aspartate and asparagine is (R) stereospecific within EGF domains. As to expression, plasma.

Its subcellular location is the secreted. In terms of biological role, anticoagulant plasma protein; it is a cofactor to activated protein C in the degradation of coagulation factors Va and VIIIa. It helps to prevent coagulation and stimulating fibrinolysis. The polypeptide is Vitamin K-dependent protein S (PROS1) (Bos taurus (Bovine)).